We begin with the raw amino-acid sequence, 203 residues long: MLSSFPVSATQLGDTIAAVLGDKVKSLKIALGEVTVTVGAADYLASAVLLRDAAGCRFEQLIDLCGLDYSEYKDGQYDGLRYCVASHLLSVSLNQRVRLKVFCPDDDFPVVDSVNGVWNSANWFEREAFDLYGIIFEGHNDLRRILTDYGFIGHPFRKDFPTTGYVEMRYDAEQKRVIYQPVTIEPREITPRVIREDNYGGLQ.

Belongs to the complex I 30 kDa subunit family. NDH-1 is composed of 14 different subunits. Subunits NuoB, C, D, E, F, and G constitute the peripheral sector of the complex.

The protein resides in the cell inner membrane. It carries out the reaction a quinone + NADH + 5 H(+)(in) = a quinol + NAD(+) + 4 H(+)(out). In terms of biological role, NDH-1 shuttles electrons from NADH, via FMN and iron-sulfur (Fe-S) centers, to quinones in the respiratory chain. The immediate electron acceptor for the enzyme in this species is believed to be ubiquinone. Couples the redox reaction to proton translocation (for every two electrons transferred, four hydrogen ions are translocated across the cytoplasmic membrane), and thus conserves the redox energy in a proton gradient. The sequence is that of NADH-quinone oxidoreductase subunit C from Polaromonas sp. (strain JS666 / ATCC BAA-500).